Consider the following 113-residue polypeptide: Large ribosomal subunit protein uL22 (113 aa).

Belongs to the universal ribosomal protein uL22 family. As to quaternary structure, part of the 50S ribosomal subunit.

Functionally, this protein binds specifically to 23S rRNA; its binding is stimulated by other ribosomal proteins, e.g. L4, L17, and L20. It is important during the early stages of 50S assembly. It makes multiple contacts with different domains of the 23S rRNA in the assembled 50S subunit and ribosome. In terms of biological role, the globular domain of the protein is located near the polypeptide exit tunnel on the outside of the subunit, while an extended beta-hairpin is found that lines the wall of the exit tunnel in the center of the 70S ribosome. The protein is Large ribosomal subunit protein uL22 of Desulforudis audaxviator (strain MP104C).